A 61-amino-acid chain; its full sequence is Large ribosomal subunit protein uL30 (61 aa).

Belongs to the universal ribosomal protein uL30 family. In terms of assembly, part of the 50S ribosomal subunit.

The polypeptide is Large ribosomal subunit protein uL30 (Corynebacterium aurimucosum (strain ATCC 700975 / DSM 44827 / CIP 107346 / CN-1) (Corynebacterium nigricans)).